Consider the following 754-residue polypeptide: Phosphatase and actin regulator 4B (754 aa).

A compositionally biased stretch (basic and acidic residues) spans 1-12 (MENRDDEVEHQH). 4 disordered regions span residues 1–38 (MENR…FSTL), 83–105 (KELP…KNGH), 120–625 (VHSP…SKEQ), and 637–666 (LTRR…DRQA). The RPEL 1 repeat unit spans residues 61 to 86 (EVLERKMSMRRPRQELIEQGVLKELP). Basic and acidic residues-rich tracts occupy residues 138–153 (PEDR…DHRG), 184–221 (HGED…EPDW), and 229–241 (SSVE…RESD). 2 stretches are compositionally biased toward low complexity: residues 296–307 (SFCSSNSSSSSS) and 316–333 (SSAG…LTTS). Composition is skewed to pro residues over residues 348–357 (KQPPMPPPKP), 381–390 (KPSPPMPPKR), 427–445 (LPPP…PSPP), and 460–478 (YPLP…PPED). 3 stretches are compositionally biased toward acidic residues: residues 483–503 (DEDD…DEEP), 541–557 (SEEE…ESDS), and 566–576 (DESDEDEEDDS). Positions 605–615 (QAPERQAKSEH) are enriched in basic and acidic residues. RPEL repeat units follow at residues 635 to 660 (TALT…QPKN) and 673 to 698 (RRLT…RFHE). S642 carries the phosphoserine modification.

It belongs to the phosphatase and actin regulator family. As to quaternary structure, binds ppp1ca and actin.

It is found in the cytoplasm. The protein localises to the cell projection. Its subcellular location is the lamellipodium. Regulator of protein phosphatase 1 (PP1) required for neural tube and optic fissure closure, and enteric neural crest cell (ENCCs) migration during development. Acts as an activator of PP1. During neural tube closure, localizes to the ventral neural tube and activates PP1, leading to down-regulate cell proliferation within cranial neural tissue and the neural retina. Also acts as a regulator of migration of enteric neural crest cells (ENCCs) by activating PP1, leading to repression of the integrin signaling through the rho/rock pathway. The polypeptide is Phosphatase and actin regulator 4B (phactr4b) (Danio rerio (Zebrafish)).